A 439-amino-acid polypeptide reads, in one-letter code: MASDADMEDYGFEYSDEEQEEQDVDIENQYYNSKGMVETEPEEALSGFAEVVQMEPEKADWGFKALKQTVKIYYRLGKYKEMMEAYTEMLTYIKSAVTRNYSEKCINNIMDFVSGSASQNTGLLQEFYQTTLKALEEAKNERLWFKTNLKLCNIWFDIGEYRRMTKILKELHKSCQKEDGTDDQKKGSQLLEVYAIEIQIYTETKDNKKLKQLYHKALAIKSAIPHPRIMGIIRECGGKMHMAERQWEEAATDFFEAFKNYDEAGNQRRIQCLKYLVLANMLMESEVNPFDGQEAKPYKNDPEILAMTNLIAAYQRNEIIEFERILKSNRRTIMDDPFIRNYMEDLLKKVRTQVLLKLIKPYTKIGIPFISKELNVPETDVTELLVSLILDSRIDGHIDEMNRYLLRGDSGNGRKLHKAVDKWNSQLKSLSSNITSRVC.

A disordered region spans residues 1–23; it reads MASDADMEDYGFEYSDEEQEEQD. The PCI domain maps to 243-412; that stretch reads AERQWEEAAT…RYLLRGDSGN (170 aa).

It belongs to the CSN2 family. Component of the CSN complex, probably composed of CSN1, CSN2, CSN3, CSN4, CSN5 (CSN5A or CSN5B), CSN6 (CSN6A or CSN6B), CSN7 and CSN8. In the CSN complex, it probably interacts directly with CSN1 and CSN4. Interacts directly with CUL1 and CUL3A.

It is found in the cytoplasm. Its subcellular location is the nucleus. Functionally, component of the COP9 signalosome complex (CSN), a complex involved in various cellular and developmental processes such as photomorphogenesis and auxin and jasmonate responses. The CSN complex is an essential regulator of the ubiquitin (Ubl) conjugation pathway by mediating the deneddylation of the cullin subunits of SCF-type E3 ligase complexes, leading to decrease the Ubl ligase activity of SCF. It is involved in repression of photomorphogenesis in darkness by regulating the activity of COP1-containing Ubl ligase complexes. The complex is also required for degradation of IAA6 by regulating the activity of the Ubl ligase SCF-TIR complex. The chain is COP9 signalosome complex subunit 2 (CSN2) from Arabidopsis thaliana (Mouse-ear cress).